Reading from the N-terminus, the 131-residue chain is D-ribose pyranase (131 aa).

Catalysis depends on His-20, which acts as the Proton donor. Substrate-binding positions include Asp-28, His-98, and 120 to 122; that span reads YAN.

This sequence belongs to the RbsD / FucU family. RbsD subfamily. Homodecamer.

The protein localises to the cytoplasm. The enzyme catalyses beta-D-ribopyranose = beta-D-ribofuranose. It participates in carbohydrate metabolism; D-ribose degradation; D-ribose 5-phosphate from beta-D-ribopyranose: step 1/2. In terms of biological role, catalyzes the interconversion of beta-pyran and beta-furan forms of D-ribose. The chain is D-ribose pyranase from Symbiobacterium thermophilum (strain DSM 24528 / JCM 14929 / IAM 14863 / T).